The chain runs to 123 residues: Probable cytochrome c 2.2 (123 aa).

Residues 1–21 (MGKKKSDTASGGAIPEGDNEK) are disordered. Residues C30, C33, H34, and M95 each contribute to the heme c site.

Belongs to the cytochrome c family. In terms of processing, binds 1 heme c group covalently per subunit.

It is found in the mitochondrion intermembrane space. Electron carrier protein. The oxidized form of the cytochrome c heme group can accept an electron from the heme group of the cytochrome c1 subunit of cytochrome reductase. Cytochrome c then transfers this electron to the cytochrome oxidase complex, the final protein carrier in the mitochondrial electron-transport chain. The protein is Probable cytochrome c 2.2 (cyc-2.2) of Caenorhabditis elegans.